The following is a 470-amino-acid chain: Sulfate adenylyltransferase subunit 1 (470 aa).

The tr-type G domain maps to 22–236 (KELLRFITCG…YLETIKIDYA (215 aa)). Residues 31–38 (GSVDDGKS) form a G1 region. 31–38 (GSVDDGKS) is a binding site for GTP. The tract at residues 89–93 (GITID) is G2. A G3 region spans residues 110–113 (DTPG). GTP-binding positions include 110 to 114 (DTPGH) and 165 to 168 (NKMD). Residues 165–168 (NKMD) form a G4 region. The segment at 202-204 (SAL) is G5.

It belongs to the TRAFAC class translation factor GTPase superfamily. Classic translation factor GTPase family. CysN/NodQ subfamily. In terms of assembly, heterodimer composed of CysD, the smaller subunit, and CysN.

It catalyses the reaction sulfate + ATP + H(+) = adenosine 5'-phosphosulfate + diphosphate. It participates in sulfur metabolism; hydrogen sulfide biosynthesis; sulfite from sulfate: step 1/3. Its function is as follows. With CysD forms the ATP sulfurylase (ATPS) that catalyzes the adenylation of sulfate producing adenosine 5'-phosphosulfate (APS) and diphosphate, the first enzymatic step in sulfur assimilation pathway. APS synthesis involves the formation of a high-energy phosphoric-sulfuric acid anhydride bond driven by GTP hydrolysis by CysN coupled to ATP hydrolysis by CysD. The chain is Sulfate adenylyltransferase subunit 1 from Francisella tularensis subsp. novicida (strain U112).